The following is a 327-amino-acid chain: Methionyl-tRNA formyltransferase (327 aa).

Residue 121 to 124 (SLLP) coordinates (6S)-5,6,7,8-tetrahydrofolate.

The protein belongs to the Fmt family.

It carries out the reaction L-methionyl-tRNA(fMet) + (6R)-10-formyltetrahydrofolate = N-formyl-L-methionyl-tRNA(fMet) + (6S)-5,6,7,8-tetrahydrofolate + H(+). Functionally, attaches a formyl group to the free amino group of methionyl-tRNA(fMet). The formyl group appears to play a dual role in the initiator identity of N-formylmethionyl-tRNA by promoting its recognition by IF2 and preventing the misappropriation of this tRNA by the elongation apparatus. The polypeptide is Methionyl-tRNA formyltransferase (Burkholderia pseudomallei (strain K96243)).